The chain runs to 643 residues: Probable extracellular metalloproteinase 4 (643 aa).

Residues 1–18 (MHGLLLAGLLALPLNVFA) form the signal peptide. A propeptide spanning residues 19–254 (HPTESHSSGV…VHSVVDYVSA (236 aa)) is cleaved from the precursor. Positions 49–69 (SDAVPKQDGESFTTSSTGDDN) are disordered. A compositionally biased stretch (polar residues) spans 58–69 (ESFTTSSTGDDN). N-linked (GlcNAc...) asparagine glycans are attached at residues N271 and N420. Zn(2+) is bound at residue H437. Residue E438 is part of the active site. Zn(2+) is bound at residue H441. N-linked (GlcNAc...) asparagine glycosylation is found at N603 and N629.

This sequence belongs to the peptidase M36 family. Zn(2+) is required as a cofactor.

It localises to the secreted. Its function is as follows. Secreted metalloproteinase probably acting as a virulence factor. This chain is Probable extracellular metalloproteinase 4 (MEP4), found in Trichophyton verrucosum (strain HKI 0517).